A 720-amino-acid polypeptide reads, in one-letter code: Nucleolar protein 11 (720 aa).

The interval 365-392 (KDPETKPSNAGAQKKTRERKTNANAGNG) is disordered.

It is found in the nucleus. It localises to the nucleolus. Its function is as follows. Ribosome biogenesis factor. May be required for both optimal rDNA transcription and pre-rRNA processing. This chain is Nucleolar protein 11 (nol11), found in Xenopus laevis (African clawed frog).